Consider the following 155-residue polypeptide: MSNSISVSFNDEPPGSIDPVRVENFISEVLKDLNLKNWDISLLFCDDAFIQNLNKQYRDIDSPTDVLSFEQGDEYFDEAGETRFMAGDIVISLDSLSFNAEEFNVDINEELKRLIVHGILHLNGMDHSDNSPEQEMLKFQEELLMQYKNMEIYRV.

Positions 117, 121, and 127 each coordinate Zn(2+).

It belongs to the endoribonuclease YbeY family. The cofactor is Zn(2+).

The protein localises to the cytoplasm. Single strand-specific metallo-endoribonuclease involved in late-stage 70S ribosome quality control and in maturation of the 3' terminus of the 16S rRNA. This Treponema denticola (strain ATCC 35405 / DSM 14222 / CIP 103919 / JCM 8153 / KCTC 15104) protein is Endoribonuclease YbeY.